A 298-amino-acid chain; its full sequence is tRNA-uridine aminocarboxypropyltransferase 2 (298 aa).

At methionine 1 the chain carries N-acetylmethionine. The interval methionine 1–alanine 52 is disordered. Serine 132 carries the phosphoserine modification. The short motif at aspartate 178–tryptophan 181 is the DXTW element.

It belongs to the TDD superfamily. DTWD2 family.

The protein resides in the nucleus. It localises to the cytoplasm. The enzyme catalyses a uridine in tRNA + S-adenosyl-L-methionine = a 3-[(3S)-3-amino-3-carboxypropyl]uridine in tRNA + S-methyl-5'-thioadenosine + H(+). Functionally, catalyzes the formation of 3-(3-amino-3-carboxypropyl)uridine (acp3U) at position 20a in the D-loop of several cytoplasmic tRNAs (acp3U(20a)). Also has a weak activity to form acp3U at position 20 in the D-loop of tRNAs (acp3U(20)). Involved in glycoRNA biosynthesis by mediating formation of acp3U, which acts as an attachment site for N-glycans on tRNAs. GlycoRNAs consist of RNAs modified with secretory N-glycans that are presented on the cell surface. This chain is tRNA-uridine aminocarboxypropyltransferase 2, found in Macaca fascicularis (Crab-eating macaque).